Consider the following 18562-residue polypeptide: MEGNEKKGGGLPPTQQRHLNIDTTVGGSISQPVSPSMSYSTDRETVMRSASGHATVAETHLIRSIGSQSQSYTEEHWSSEITSFVALAPPKFIQVIKAYRVHSTDTISLVVEVASDPPAIFEWFYNEKSVLQDRDRFQVGHGINISRLKVSRPEQGVYKCVTRNPAGVSTSYGYITVNADREHLSSSKEDMRLQRQHSVTYHQAPRFLTQVPNLFVTAGSNVIIDVEVDANPPARFSWFVNGKEYRDSIHGVEMFSPDVNRSVVRFSIPVAGEYKVVASNVHGSAMSCGHVDIQKVIELEESTLTTSTTAFDPMTTSMRALGNNGRNSRQAVNMFELNYTQRSSSVPRGVRHLESHIEVSNMTGEEKKTQQQTRTDAASIVESRFHPQPPKPPRAGTSRRFLPEPPKFVTTLPSVITVNAEEKLVLSVDVQAIPAAEFAWHVNGFEVKKSQSVVLLDEHNKSTLVLHPPVKQGKYKVTARNDVGSDSVTTQVTRIGEVKDGAGSEPPDIVESAVTVTCSHEEDVGSHSSLQTVRRIQEMQEEDEVDPIKPFIEATSPKVKESVEHPFANILNPKKREERLSPSGKGKHLLFAPRITAHPSESVFKILDGSPLKLRVMASSLPPATFLWMLNNFELRSNQNVTIRNDEENSSEIEFQKAPNGNVTVSAKNHLGEDRWTGKVILQYESPPPGQKITTIEKVTESWTLEEAVITQVVPTAADPGDRIVIIVRFDENKTSNCQFNWTINGVNIEKLEENLVAVESTEFESSLIVEKLEEQLCGEVVCVVKNQHGEVFSSSAHLRIRDDDSSFEIVPPNLPEECAPKIVEPLHSASFLDGQAMSLRCKITANPSAAVVWSKDDVNVEDWVLNKDVTTTVLDGGVCELLNPECFAEDAGLYKCTATNPHGTAETAAFINVEGAEYIKDHEEAEISESVLTDDVHIILPPKFIETLTAETDNFQQLGYVRMVATVRSVAPITVSWQKDGMDIYENEKYEVMQFADGAQILTIRAPTNLDSGVYTCTAESEHGVSNSSCQVELTISAESSPESFEKVEITPPEEVKETGIDDDIEVILKEEVSGTAQIEKREEEFKLLVKVADQVASTLVANVFLEAVHEAVKKIVETEDEEEDNQIEATQEPRFETSTDEYHVKENGTIKMAATISGHPTPFLEWYFGEEKLQVSQNVSMYYEAGTSAIILKNVQKRQGGNYFLRAHNCHGESILPMKLTVDPIEAVTHVLETSIPKVVVEQDAKEEEVRRAAEIISEQFAQLWVQDAQTEAVSAQAHQTPVVAEQASEEPTLPEVVAALQEQKPSVEKAPQPQFEVLETEDQDVVEQMQKQLPPVQKSMSVQEEKASSQRTPSPMNYEDKVKTIQSNLLRVNSHEAMEPIEATNLLLNTALQLKNEHVCDETTTVIVTQQPQKYDQLVTVVESNIEYHALRLSTSSSSPLKFIDLETIIQKPSTSCESIDRMFVEKSKRTANAQHRIVVLQGMSNTFHNAITWSLKKVKKLVGDAEAKAYADVEVVKQDETNEQVMTIIDNDTIVPQLLQVAAAANKLKLENVSVALIKEGDRAHQELVIEYESSIDEPMFEPVHNTSHLTFHQQQPTGPDQHVWSRRSKFEEDEAHVVAVFVEVDANCPDQSVEIVATVNAAYEGDNRQGIEDEPFTEVSQSLATESSAAPQAPKFLRKLVNCFGRIGEPVQLKCLIAGMPQPEIEWTVDGDPIVPNDEYSIVYEDGVCILRIESTLIEDEGEYCCTASNVAGTTFSKCYLKLSEADDDAVDLLRQLSEIKIIDPTLSTGYPMSMISDEENTSHQLLSNVLLTDKEVPITATYNEDLSRAESFRRFFESAETTVKVTELYQGESVEAQFQQPEKREQVSTSNTDVMFVNQKVDVMESTVSTVGNAVRQSVSSSTNSWDYMFNDPFPESQEINVIENELYEPRVPLLPQKLSYKGQEIFANTNTVERNSKAGAKAKGEVENLKKCVETLLLFDAEMDMKDIKESSPKKEIISKKDQQSLDDQIKVTQQILKDVERDLNKMERTSPGKSLSPNKRTFAPKDVEDIEAAIFSISDQLADRQSSEEALREALQEMILSNSSPMKELSRNNETSKPEVLKSEIQKIPEVETKISEVYPIVKLKQAISAIENSLLEDTEVTEIMKRKGSDKDKRKATRIKRVPSAHSARITPITSNLRDRLNQLHQLTVSEDSGSLKQNEEAKEIQELFVKIEKEINTIAELCKEKMTKKGADTVTHVLNSVLQHVASIINVILVAQDHQPIEVHAETTKTAEVSVWYSFDVHPESEDIIGIVDEEPTNRRPSSTPRGSTRSSNLTTSQDSQATTKMTVSSEDTIEAPIAPPRKGRSLSRDAERLLEIQPRAPPRRSRQSGDTLSPEPTPVLTLVKSDETPAPVRPPRSRSRHSGDELAETSPEAQPIRPPRSHSRHSGDELEEVQPVRPPRSKSKTADANCLQIESMDESQYSLSCIHIQKTNFAFTNSTHETSNASVVVDLRNMAQLECTVQSLDDLASIQMLCEESDYPSDTDRSLLLAGTVRYFNRASPSLHEVSPSLNMESVSMDLKPETEPEEIVQDVYVNVELHSVPSLSSLVEVNPNTLMQTLASEKSSLKAAEEDEKEGEEEGEEEVTADVSFIGRSVLSTETLDVVLEEKDMSQMNSTLPLDYERAFSSNTIRETDILSDESITVDSSYHKSPEPTVDFARSQVKSEEVTENFSLIHKPARRRVTGIVVNSLIYTIAANIAEDNTFDVDVVQEPQRYNISIKVIEDIVDFTSLTIMSDCEDDPPADVLVLKQDTSKLQALSYDDISVATTRTGITVSIVARSLNDGIYASLEEIAWGEVEMTVPDIMQMSTEEKSSLQFNVTVSESNLEEAKSLKSQVSFRSSQNSVSEMDNTISSTATISIPSYVVKLESTATITCELNNYLPKNCTIDWYCGKTKIIIDHEQFDRISHDLLEVLIIRSVEAINGNLYSLKINEDLFPVAYLIVENTNLTTSANILTRPETQFVMEGQPTVITVELDDPNVIVNWLKDRRPLHENERIRLETDGQGNHRVIIPNTCVGDQGTYLALTSSESVAITLVVEERIEEKEVMVIASGTESEEDDVQEYLVPPGSTATIACELEECELKRSIRWLRDGKDIRFEQGKTEHVQNGLKHYLVVHDATSLDSGLYKTERSEEQCEETIIPRGVVATIQCQTSEPQESIQWSKDGNIIPSDISRFEFRSLDNNQSHEMVISNISWSDAGVYSVLINGKSSFVSKIVVVESELITQSVEEEPEAEPEIDVSLHIVESEQIIELNVPQSPKLGASHETLVPIGQDDIEVIDKQEAAPVVESIEETSSIGSEEFEIIEKFTEEEVPKVAEPSEPTQADVPKIAAPLEQSQIQQEVPTVAAPSEPTQADVPKEAAPSEPSQADVPKVAAPLEQTQIQQEVPMVAAPLEPTQADVPKVAAPLEQSQIQQEVPTVAAPSEPTQADVPKEAAPSEPSQADVPKVAAPLEQTQIQQEVPMVAAPLEPIQEEVPKEAAPSEPTQEDVPKGAAPLEPTQEDVPKEAAPSGPTQEDVPKEEAPSEPTQEDVPKEAAPSEPTQENVPKEAAPSEPTKDVPKEAAPSEPIQEEVPKEATLSEPTQEQSEVSKRSEPVEPTQIQQAASEEETPLEETNETVVQTNEDVKEAEVPENAEAQKVVDSSDLQVAASEIAHLAIDEAVLETSNQPSQFDSLQEQKPSVVHENEHVRSVCVDLTFSRDSEQIVSDVIVAEVGYDEDECSTIADTITSLSSSPLYTAPVFTERLPSSACFANSKLTLEVMFSGVPQPTISWLIDDHELVSDGERISIKCENGVSAIRFFNVDRNAGGFLKCRATNCAGQVETSCEIVAADEISVISDSSITSSTRPHFVVPLPERVTHTVNDHITIKCKFSGQPLPAAMWEKDGVLLDLQKYQVTTEDGTSILKIESASLDDKAVYTCTIANEAGCESTSCTIDVVDDHLGLQQTGLHVMCERDQNDVELDILVQSPNHLGVTFNFPPVNRTLARQPPYFLLPLSDKVVIDEKCTLKCVVMGIPLVIVKWIVDGVVVTEDDNHEIHFEDGIALLRMKNIKKDKSVVQCEAINCKGKVTTSCVLTKCGVEESEAGDLQKPSFVLSLKDTCTTTDHATLKCIVVGTPLPDVSCSFNGVTDNSKIRSEDGIVLIQVNDVTEEGIVVECTISNETGSSTSNCVVKIIKQEEKNYQRPIIVFNQAGSVNNERELSVKVGVIASPEPTLFWKHNGKSIEEGGDYYLIFEDGIGILKVFNIQDGSHEFTCIAKNEYGQTTVEIPVEIGLKTENKLTLVKTLNDIAVVDDIVQLKIVAEGDLPIEFKWFEDGQILEDDSSHKITVDKCISTLQLKLEETGTRIITCEVSNSSSKVNASCNVERVHNTVSDFVMTNDNSTRFLAVGRKCTRERNNTILKAVVVARENIGDICEIDGEKIPDAYIEGNSLSIKVDTLSKKLSNVSFKVSASEGKVFETRKIEIAQEDTDEENFEINYSLRIDEQSGNTTYTFENSELYQGNQSRELDNTERNFTVNKEKDESKKPSEVQPAEIVEQKDVPVQETSAPTVEKLAPVESKETPEVQAAEIVEQKDVPVPETRAPTVEPTVEKHTPVDSKETSEVEPAEIVEQKDVPVPETSAPTVEPTVEKHTPVESKEKSEVQPAEIVEQKDVTCEEEIKELLTEVEVELFFSQAEVFSGLELDLLMECSEYVTTSIQKGSTAAPAQEPTVEKLAPVESKETSEVEPAEIVEQKDVPVPETSAPSVEPTVEKLAPVESKETSEVQQAEIVEQKDVPVPETSAPSVEPTVEKLAPAESKETSEVQPAEIVEQKDVTCEEEIKELLTEVEVELFFSQAEVFSGLELDLLMECSEYVTTSIQKGSTAAPAQEPTVEKLAPVESKETSEVQQAEIIEQKDVPVPETSAPTVEPTVEKLKPVESKETSEVQQVEIIEQKDVPVPETSAPTVEPTVEKLAPVESKETSEVQQAEIIEQKDVPVPETSAPTVEPTVEKLKPVESKETSEVQQVEIIEQKDVPVPETSAPTVEPTVEKLAPVESKETSEVQQAEIIEQKDVPVPETSAPTVEPTVEKLKPVESKETSEVQQVEIIEQKDVPVPETSAPTVEPTVEKHAPVESKETSEVQPAEIVEQKVVPVPETSAPTVEPTVEKLAPVESKETPEVQPAEILEQKDVTCEEEIKELLTEVEVELFFSKAEVFSGLELDLLMECSEYVTTSIQKGSTAAPAQEPTVEKLAPVESKETSEVEPAEIVEQKDVPVPETSAPTVEPTVEKLKSVESKETSEVQQAEIIEQKDVPVPETSAPTVEPTVEKLAPVDSKETSEVEPAEIVEQKDVTCEEEIKELLTEVEVELLFSQAEVFSGLELDLLMECSEYVTTSIQKGSTAAPAQEPTVEKLAPVESKETSEVEPAEIVEQKDVPVPETSAPTVEPTVEKLKSVESKETSEVQQAEIIEQKDVPVPETSAPTVEPTVEKHAPVESKETSEVQPAEIVEQKVVPVPETSAPTVEPTVEKLAPVESKETSEVEPAEIVEQKDVPVPETSAPTVEPTVEKLAPVESKETSEVEPAEIVEQKDVPVPETSAPTVEPTIEKLAPVESKETSEVEPAEIVEQKDVSVPETSAPTVEPTIEKLAPVESKETSEVEPAEIVEQKDVSVPETSAPTVEPTVEKLAPVESKETSEVEPAEIVEQKDVPVPETSAPTVEPTVEKLAPVESKETSEVQPAEIVEHKDVQVPETSSPTVEPTVEKLAPVESKETSEVEPAEIVEQKDVPVPETSAPTVEPTVEKLAPVESKETSEVEPAEIVEQKDVPVPETSAPTVEPTVEKLAPVESKETSEVQPAEIVEQKDVSVPETSAPTVEPTVEKLAPVESKETSEVQPAEIVEQKDVPVPETSAPTVEPTVEKLAPVESKETSEVQPAEIVEHKDVQVPETSSPTVEPTVEKLAPVESKETSEVEPAEIVEQKDVPVPETSAPTVEPTVEKLAPVESKETSEVQPAEIVEHKDVQVPETSAPTVEPTIEKLAPVESKETSEVEPAEIVEQKDVSVPETSAPTVEPTIEKLAPVESKETSEVQPAEIVEHKDVQVPETSSPTVEPTVEKLAPVESKETSEVQPAEIVEQKDVTCEEEIKELLTEVEVELFFSQAEVFSGLELDLLMECSEYVTTSIQKGSTAAPAHEPTVEKLAPVESKETSEVEPAEIVEQKDVPVPETSAPTVEPTVEKLAPVESKETSEVEPAEIVEQKDLPVPETSAPTVEPTVEKLAPVESKKTSEVEPAEIVEQKDVPVPETSAPTVEPTVEKLAPVESKETSEVEPAEIVEQKDVPVPETSAPTVEPTVEKLAPVESKETSEVEPAEIVEQKDVPVPETSAPTVEPTIEKLAPVESKETSEVEPAEIVEQKDVSVPETSAPTVEPTIEKLAPVESKETSEVEPAEIVEQKDVSVPETSAPTVEPTVEKLAPVESKETSEVEPAEIVEQKDVPVPETSAPTVEPTVEKLAPVESKETSEVQPAEIVEHKDVQVPETSSPTVEPTVEKLAPVESKETSEVEPAEIVEQKDVPVPETSAPTVEPTVEKLAPVESKETSEVEPAEIVEQKDVPVPETSAPTVEPTVEKLAPVESKETSEVQPAEIVEHKDVQVPETTATTFEPTKEKLAPVDSKETSEVQTAEIVEQKDVPVPETSATTVEPTKEKLAPGESKETSEVQQAAIVEQKDVAVPETSATTVEPTKEKLAPVESKETSEIQTAEIVEQKDVPVPETSTSYVEPTKEKLAPGESKETSEVQQAAIVEQKDVPVPETSATTVEPTKEKLAPVESKETSEIQQAAVVEQKDVPVPETSATTVEPTKEKLAPVESKETSEVQQAAIVEQKDVPVPEANAPTFEPTVEKLAPVESKETSEVQQAAIVEQKDVPVPEANAPTVEPTVEKLAPVESKETSVESKETQADAKLKKEKDDKHKQEADAKLQKENDDKLKQEADAKLKKENDDKLKQEADAKLKKENDDKLKQEADAKLKKENDDKLKQEAAAKLKKENDDKLKQEADAKLKKENDDKLKQEADAKLQKENDDKLKQEADAKLQKENDDKLKQEADAKLQKENDDKLKQEADAKLQKENDDKLKQEADAKLQKENDDKLKQEADAKLKKENDDKLKQEADAKLKKEKHDKLKQEADAKLQKENDDKLKQEADAKLQKENDDKLKQEADAKLQKEKDDKLKQEADAKLKKEKDDKLKQDADAKLQKEKDDKLKQEADAKLKKEKDDKLKHEADAKLQKEKDDKLKQEADAKLKKEKDDRLKKDADAKLQKEKDDKLKQEADAKLKKEKDDKLKHEADAKLQKEKDDKLKQEADAKLKKEKDDKLKQEADAKLQKEKDDKLKQEADAKLKKEKDDKLKQEADAKLQKEKDDKLKQEADAKLKKEKDDKLKQEADAKLQKEKDDKLKQEADAKLKKEKDDKLKQEADAKLKKEKDDKLKQDADAKLQKEKDDKLKQEADAKLKKEKDDKLKHEADAKLKKEKDDKLKQEADAKLKKEKDDKLKQDADAKLKKEKDDKLKHEADAKLQKEKDDNFKQEANAKLQKEKDDKLKQEKDDNFKQEANAKLQKEKDDKLKQEKDDKLKQEADAKLKKEKDDKLKQEADAKLKKEKDDKLKQEADAKLKKDKDDKLKQEADAKLKKEKDDKLKQEADAKLKKDKDDKLKQEADAKLKKDKDDKLKQEADAKLKKEKDDKLKQEKNDKLKQEADAKLKKEKDDKLKQEADAKLKKEKDDKLKQETDAKLKKDKDDKLKQEADAKLKKDKDDKLKQEADAKLKKDKDDKLKQEADGKLKKEKDNKLKQEADGKLKKEKDNKLKQEADAKLKKEKDDKLKQEADAKLKKEKDDKLKQEADAKLKKDKDDKLKQEADAKLKKEKDDKLKQEADAKLKKDKDDKLKQEANAKLQKEKDDKLKQEADAKLQKEKDDKLKQEADAKLKKEKDDKLKQEADAKLQKEKDDKLKQEADAKLKKEKDDKLKQEADAKLQKEKDDNFKQEANAKLQKEKDDKLKQEKDDKLKQEADAKLKKEKDDKLKQEADAKLKKDKDDKLKQEADAKLKKEKDDKLKQEADAKLKKEKDDKLKQEADAKLKKDKDDKLKQEADAKLKKDKDDKLKQEADAKLKKEKDDKLKQETDAKLKKDKDDKLKQEADAKLKKEKDDKLKQEADAKLKKEKDDKLKQEADAKLKKEKDDKLKQEADAKLKKDKDDKLKQEADAKLKKDKDDKLKQEADGKLKKEKDNKLKQEADGKLKKEKDNKLKQEADAKLKKEKDDKLKQEADAKLKKDKDDKLKQEADAKLKKEKDDKLKQEADAKLKKEKDDKLKQEADAKLKKDKDDKLKQEADAKLKKDKDDKLKQEADAKLKKEKDDKLKQEADAKLKKDKDDKLKQEADAKLKKDKDDKLKQEADAKLKKEKGDKLKLEDQTNQSRIFEETSIEVTSLLKCKQQAIIVSKSFALCERVVLNAEEPFTLEVFCNAVFVKQRTDKIGIGIIFERSGASKKDESRPDRLDDNCVLTDVTDGLSILSPPPKAKKHLKKKKKHHKKEKIAVKETEQDEKTVSHLKPEISGMERKRSNSGSSDIFVDVDIEAGEESIHTDALVDLNFYDYDQMELSIFEDYDSDDDSASIDCDVSLSNVAADDGIDVFPSDGDTQEVEQKVTLPKKHQSDEDVISKEEENLETSVSYGSIEETVSFTIGTGQSIIEHPKSHAVGQMNSEVIIKCKTSQPISDAKWFCNGMVLLPDEQVNMTVTGCEAVLRLVKFLPQNKGNYHVLIDGSIGSQPAILSGPVPPVILNKLTKPITHQAGKSFTYKFNFMGAPAPRLRVLSNGEPVSFDVKYEIYDNIASLYIPKMSKRDGGEYTVVLENKYGKDESDLHITMVDTPLKPRKAQLVALTDTSATFKWLPPHTGESDILHYIVMRRSTESRRWRNIGHVQEKTFTAIELVPNEFYAFRIVAVNGFGEGAPSEIIEVNTLDYDQEESFDFAGEEELKLDDVQVNNEVVTEITIEESEVTIEEHRKLKKKSKKSKKTTDEPELDSEIALEVSSDITSSLEITTESTIPDTAPESQETLNVEIAVTETTVQKITNPSDESAKKDVNEDTAVSSIVKKDDKDVNKKSLPESGLTTKKEIQGKPEKKIMKKKTEKADSSISETSETLTKDLTQTKQSEPEPAKRTTETSVQDEVKRKTETTSKSKQTTEEHPQPGGKSDSSISSTSDASEVKQVQQSESEAQKVTEKPETAKLESKSKMTEDTTKESDNKETVDEKPKKKVLKKKTEKSDSTISETSETSAVESAGPSESETQNVAAVDKEKKQKETDEKQKLEAEIAGKKSTEQKSKLEAEAKLKRAAEEDAAKKQKEKTEAASKKAAAEKLELEKQAQINKAAEADAVKKQNELDEQNKLEATKKLAAEKLKLEEQSAAKSKQAAEEQAKLDAQTKAKAAEKQTGLEKDEKSNKDSGSNETVEEKPKKKVLKKKTEKSDSSISQKSDTSKTVAESAGSSESETQKVADATSKQKETDKKQKLEAEITAKKSADEKSKLETESKLIKAAEDAAKKQKEKEDKLKLEADVASKKAAAEKLELEKQAQIKKAAEADAVKKQKELAEKQKLESEAATKKAAAEKLKLEEQAQINKAAEADAVKKQKELDEKNKLEANKKSAAEKLKLEEESAAKSKQTVEEQAKLDAQTKEKTAEKQTGLEKDDKSTKDSESKETVDEKPKKKVLKKKTEKSDSSISQKSVTSKTVVESGGPSESETQKVADAARKQKETDEKQKLEAEITAKKSADEKSKLEAESKLKKAAEVEAAKKQKEKDEQLKLDTEAASKKAAAEKLELEKQAQIKKAAEADAVKKEKELAEKQKLESEAATKKAAAEKLKLEEQKKKDAETASIEKQKEQEKLAQEQSKLEVDAKKSAEKQKLESETKSKKTEEAPKESVDEKPKKKVLKKKTEKSDSSISQKSDTAKTVAESAGQSDSETQKVSEADKAHKQKESDEKQKLESEIAAKKSAEQKSKLETEAKTKKVIEDESAKKQKEQEDKKKGDDSAKKQKDQKEKQKLESEATSKKPTSEKQKDEKTPQEKAKSENETVMTTEPQQLEVKSEPKKSDKTETVEKEVASSTEKSDDSKTKEPKEKKKIIKKKKDTTKPQEASKELSSDESRIDLESDISLSLDTVTESDDLSTASTIKLQKESDESGIDSRMGQTSEAEDSPFISQPVSATVTEMAGEAKFTVKFSRKPIYVKWMRDDREIRVAYGKASVETTDDSSVLVIKNIDGKDVGNIYAVFDSEYRSAMARLDLRVPCKITLESSSNAPEIVAGKNLDLSFKISGYPLPTNIELLHNNENLRTRSDVTDFDDSISIRMKRLKLEDSGEIKIIGKNDSSEDQLRIPINVIEVTSKPTSLQVTSTERETVTLTWSLPTELNGSNVNEYLVERKTVDGGRWRHACTVTDSRAVVDGLFSGTEYVFRVVAVNGAGQSAPSDTIEATTQAEEEIDETVPTSPVEKVKEPVSKKPENTKESEGHKKRDRKESEDHDENNLGKSGKDEFATSGESGTSNQNEESAQLNTSFTSTEQHGQTEKQVRKGTRKSLTRSLNIRESDIDADVVEVEYDEQGDDIPSDPTTSGTYAFDKIEEEPARTSGEMAMAEKDSDAMEVRGLNKKLSKKGGKEGTSTEKSSSKTKKQEKSALSVQEMNKSLKKKGEKGEAETAASDFIENADQTGMSIQDLNKSMKKKVESGEATGQINDASNNKDADELSIQDSQQSLKKKSENESVTGEQLDKSQEVEDDKMTIQSLKKSIKKKPESREVSGGKSEKSKEKESDEMSIQQLNKSVKKKPENEAVTQGKSGKSQEQESDKMSIQALNKSMKKKDGVDGVEGNINIGRSDGDQLSVNDIDAELSTSEQVENASQNLGATADSDGDSLSLQTLKKRISKKGIHGEAESKLGEKQSGSDSFTLQDLYEELKAKEDAVEAGAETSNADQSAEKTSLEVRDMKKKMKKKQVSGTAENLIGESNRDETSMEIRDLNTQHSNQTGEDESSTFNFGQKDQEQYSMVMKDVSKKLARQNAEEIQSGKLIPTTNEEKTGLALTGKNKNLKKGEENEKTKFEAKHLGSSSASDSLAESTLRSKKTKKGEVEKSELSIDMKNQDKTTLATTLLEDDLAKTTSAEESEAEHLVALQNKEKTSLAMRRKRVSFDSSTKSESIEDVIPDKNRDSDKMSITGIKKKMSQKSESAEAQKNESPEVKEISSFEEKTLKSKKKSKADRNQGTEANLGDKTIDKDYLSVTDKNQSLEKSEASGQAEKSIKAPNKSKVTTSFADESLTSELDRLMADEEMAEMMFAEEEKAADLLNVMNKNKGLNKSEQEESQEISLKSQSKVKDSDSLSSTDKKIGLKKSDKDQKLGTSKIFGSKDQESVGYEEKTSNFSKQRRGVSDLGSDAMTDQKNVQESQYAEISADDHMSKTGADGEISATRTIVDGSDAAQGSEYAEISKKRKFKRAEQIGEAETSLCDSRENTHDSLSISDVNPELRRSNVEISAFGQIDLTAEEVTSLTDINKDAQLTKKQDENDAKKSVSKNLKAGAKKDSDTLSITSKKDKFGKRQDSREASATVEQQGEEKVTKNLKGSRGKKEKLGDAGIDVNFENQEEFASTTGDIESIVSEKGHDTYSEKTVKSSKKKSPQTAGAEYGGSESLNASSALSTTDVDAQLKNQEKDGVAESSIGKSNQKDSYSEQELNVNKKKKQAVGAAMNQGSGSTKESDNLAVASVESNLAKDSANQEASLHGLVDNDATSLSQLDSEHRLKKRDDELSAHTKLGKHTQSENIALTETDDSLVKGDSEESAELNIKQQGETAEDKYVESRKKTTLKKKPEQKQVTDTLSAVDGRHDTTSLSVADSGISFDKSMENELAGSGDGTASASVSAKVRGADGNAKTNLISSFEKPGQESKTSKTLSGKQKKQEKSSFAEKNAGFDLSMGEGKNDESVESSLQKNRDADSLALQGTDLAFSKPSDSSANAHLDMPQRELTLRICQAETVDWSDDSEVEEGTRTSAPGEVKKKKKFIISAISQDGEFSDAESITFDENGVRVEKRRRKKRDPKEYMGAGELAMRIPAFAKKMQYIGCIEGDVVVFTIKVVSDDVPLIRMYRNDFPVANFDKMAFEGFTKGSEHSFNVTINDIRKLDGGKLVFEAKNDYGVDKCTILLDVRDSGSFIEDYSEIHRSAEIQNSVGDVQVKEGETAKLTGRVDGFPLPELIWIKNGKEIDMMVPSTKYQLDYHSDGEFEARIANCTFEDDDDYSLLVENLAGVDSCNFQVFVDCNEYPDDEHFNRRRRLQRGRRVMEASSDSELDDAKKRKKRRIKRVVERRNPNAPRLTQLIPPRFDKILSDHDAIEGENVVMMVETLGEPEPQVRFYRDGKLIDDGSGDRMEVRHEDEMRKHWLILKDICKDEEAEYACQAINVAGEAWCFSDVVVHMSEESRDDDKSVDEVDDSTVLEEKKDDGDDKSKPKTKKKIIKKKETPESEQVTAAEPEQQKISEVDVQSVAETEVGAKKKPDAEKPTDLSKAKKDSKSKKSDEPEASTEEKSTTEKPTNDKTSKKSAEKKTVKPKKEVTGKPLEAKKPVEDKKDASQPSSSKESSPPTDGKKKKQIPKALFIPDEISSRFGDPSTMHSETNITTTIRGREGSADAKTPLVEPLSASVSMKVESAKEKAEFSFKRRSETPDDKSRKKEGLPPAKKSEKKDEVTAEKQSTEALIESKKKEVDESKISEQQPSDKNKSEVVGVPEKAAGPETKKDVSEIEEVPKKKTIKKKTEKSDSSISQKSNVLKPADDDKSKSDDVTDKSKKTTEDQTKVATDSKLEKAADTTKQIETETVVDDKSKKKVLKKKTEKSDSFISQKSETPPVVEPTKPAESEAQKIAEVNKAKKQKEVDDNLKREAEVAAKKIADEKLKIEAEANIKKTAEVEAAKKQKEKDEQLKLETEVVSKKSAAEKLELEKQAQIKKAAEADAVKKQKELNEKNKLEAAKKSAADKLKLEEESAAKSKKVSEESVKFGEEKKTKAGEKTVQVESEPTSKKTIDTKDVGATEPADETPKKKIIKKKTEKSDSSISQKSATDSEKVSKQKEQDEPTKPAVSETQMVTEADKSKKQKETDEKLKLDAEIAAKTKQEADEKSKLDAQEKIKKVSEDDAARKEKELNDKLKLESEIATKKASADKLKLEEQAQAKKAAEVEAAKKQKEKDEQLKLDTEAASKKAAAEKLELEKQAQIKKAAGADAVKKQKELDEKNKLEANKKSAAGKLKIEEESAAKSKQTVEEQAKLDAQTKAKTAEKQTKLEKDEKSTKESESKETVDEKPKKKVLKKKTEKSDSSISQKSETSKTVVESAGPSESETQKVADAARKQKETDEKQKLEAEITAKKSADEKSKLEAESKLKKAAEVEAAKKQKEKDEQLKLDTEAASKKAAAEKLELEKQSHIKKAAEVDAVKKQKELEEKQRLESEAATKKADAEKLKLEEQKKKAAEIALIEIQKEQEKLAQEQSRLEDEAKKSAEKQKLESETKSKQTEEAPKESVDEKPKKKVLKKKTEKSDSSISQKSKSAKSTVDAAETLESDFNLVEKKTVQKVEQSPDESTSATIKRDPAQKTEEISKQDDGDEKKTTTDGKPPKPEDSEATPKKRVVKKKTQKSDSVASDASLADVSKLSDDVEEKPKKKVLKKKTEKSDSVISETSSVDTIKPESVEIPTEKAEQMILHNRFSTDSAVESEPKNAHKDDTEKTTDDMMTRRKSSAIFSDDEQSISSKTSSEGRRRRRRTGFASKFASDTLALRGDNVEIEAELLAEDDTVTWKVNGKDADLNSRCHEMSHTFFRTLIIDEVEPTDSGMEITATCGTESHTTILKVEELPVDFVKYLPRKTSGKEGQEVTISVTLNHPIDISKVVWLKDGKPLEINKDYSIDTVGCSVSLTLRRAKYEDSGKYKVVCDGVDCSTHLSIQGKPVLKNVSETKPVITVDKDDQFSLLVAYDSNPEASFSMTVDGKDLEFDGRSRIDVVDDGLKLTKRGVSKTDAGEYEVKLKNEFGEVAQKFDVKVNDTPSAPGDVSVVKAESDCLHIEWTAPTEDNGAEVTSYVIEKKESGRRKFHKVATVNGKKTSYVVDDLEIETPYIVRIAAVNKFGTGEFIETKPVQTGSPFQVPTVEFPPTIDNVTSTSCSLSWPKPIEDGGSPVYGYDVYKRENEGEWQKMNGEELVFTESFNVRALSSGKEYEFKIEACNEAGLRSNSNVVSKKLTVEGLVPEIILDMPMVKVLDNDKVEVTWKSDGEKEFVVQYKSDGSSIWASVDIGGPRSESAATSKCIIDGLREGIPYVFRVAARNQHGTGEFSEPTIPVVVLADDAPRVLKAIKPVKIPKKGELRLECHAAGHPAPEYIWYKDGKEIIPTDENTEIVNEGSMSALIIHELAGEDVGLYKVLVENIHGTAESEAEVGISDVRAHFNSSFSELTEIEEGHDIELTCEVSDEEAVVNWYKDGKKLVASDRVQFYAMARKRTLRIKGSTDADSGVYKCETTDGRSRTEGEVIVNEQEPHILVGPQDAIVKDFGETMVLFCETSKPVRKVKWFKNGVEIWPQMNKAIMENDGKRATLEIKNFDKHDIGAYTASVSEKETSAPAKLVFEVAPNLIIPTEIRDGVTVHAGNEFDFAVEFSGFPIPTIHLTNNGTPLKAIAVVTEYDDSVSVRMKDVTLDNSGTVRVIAESPLGQCIKEIPLKIIDKPSAPCDLQFKEVTEDSVFLSWQPPLETNGAPLTGYVIERKAVDNNRWRPCGQVKPTKLTFVAEDLFCNQVYGFRILAVNEVGESEPCDTVDVLTLESSEPVSESSELFVPKIAILRTPQVTVAVDETKVTLRWEECPETSLYKVERKKVGDSDWLEIANTDRNKFKDRSLTESGEYVYQVTATGIHAVSSPSEETNPVKILVPGSEMPASKTEKKTDAAKSESEQKSAEEIVAEKQVDQSQASESTTEAVEEKKTKKVVKKKVAENKGEETLQEVKEKLKKGKAVEKVQDESRRGSLQASSDNESVTTTSEKRSEAELEKNSEKSAEKKSTSADLEAADKAETEKSETGKETTEKKKKVVKKVAKKGLVKADKSKIELTAGKEGEISAQVAETGVSVEWKKDGKALDASYTVTSTGGVSTVKIPIVDVNTSGVFTCKVKSSEGDEEEVSIAVTVKLPEVPKVEAEQSIVEVKVGDVAKLSAKISEPASSVNWTKDDKPIKEDGNVKAQLSPDGTAQLTISKTDSAHSGIYKLNVENDAGKGKVEIALRIKGAAKGAPGIPTGPIVFDDVTESSAEFSWKAPENNGGCEITGYNVERKESKNKGWKQCGKTKELKFKADGLEEGTDYDVKVSAVNTMGTGSALEGKITTLKKKEETGKQKSEKSESDEKKSESDKVSELKQIGKPEYVSSTATSIALKWTSDNDEVTYTVQMKEANSKRPWAVVAKEISECSATIAQLKEGTSYLFRVIAQNKTGQTVTSEQSESIECKDTTESKKPAFTNAPTDLTAVKNGKTKITAEFTGHPAPEIHWFKNKKEIFSGKRQWIENIAGATSLTIGEMREDDEGEYKIVVKNTAGSVEHSCKLTMDQLPEINRVDRYASTLVFDKGETVKLRLSFSGRPQPEVIWIDNNGKVIEESRKMKIEKTVLNTVLTINSIDSQDQGEFALKIKNRCGEDKYAIGIQVTDRPAAPGKPAVEDQNVDSVRLRWAAPTNDGGSPVRNYTVEMCTEKGKTWTKAEVTKQAFITLFNLVPGESYRFRVRADNTFGQSEPSDESELVVVKNVSRVVEEPKKKEVKVKEQESVDYERVAKDSEPSEYKTIDIHRLPNDLQAKYIIHEELGKGAYGTVYRATEKATGKTWAAKMVQVRPGVKKENVIHEISMMNQLHHEKLLNLHEAFDMGNEMWLIEEFVSGGELFEKILEDDSLMSEEEVRDYMHQILLGVSHMHKNQIVHLDLKPENILLKAKNSNELKIIDFGLARKLDPKKSVKLLFGTPEFCAPEVVNYQPVGLSTDMWTVGVISYVLLSGLSPFLGDSDEDTLANVSASDWDFDDPSWDDVSDLAKDFICRLMIKDKRKRMSVQDALRHPWITGPLLSAFNDLSEYVKKMQPKLDKSGVPARQKRNFLSLKRWSDDLLPIGRLAKRGAIFRRLTMDGVFERNIAFDTDAAPSVKKQLEDIVANVGDLIATLSCDVDGVPSPKVQWYKDDKELTVPSMKYDSFYNEGLAELTVKNIVESDAGKYTCRATNDLGSIMTHAKLSVKADEKKKKKSKTSPAVIEKKKDRKTSKVVVIEEMIDMPPNFHHLLQDDEAKIGEPKILVVTNTTLPEPTVDWYHNGEHISINDSNYLRKHDKGRYELHILSVDSTDEGKWKAVGKNAFGECESEAKLTVVIPDGQYAPSFGKQLSDVKCSESDILKLEVNIQANPAPEINWFRNESEIEHSQHHRLQFDDGSGNYSLTIIDAYAEDSGEYKCVAKNKIGKAHTVCCVRIEELLSKRSKKIDGSKAPRFRMQLPTPREVPQGADLTLVCSVSGTPHPNIKWTKDDKPIDMSNKQVRHENGVCTLHIIGARDDDQGRYVCEAENIHGVAQSFSVVEIKEAVDKDHVRPKFLEPLVNCSTCEGNEMVLECCVTGKPIPTITWYKDGLKLIIENRMLQYTDRKGVSRLNIMNVVMNDDGEYTCEAVNSLGKDFTHCTVKVVDMGLSKTRLTPVRSRSRSRSRSPSVVGGEIQRPPVVTRPLADATVTEGNRELLEVEVDGFPTPTIEWYHDGKLVAESRTLRTYFDGRVAFLKIYEAHEEHNGQYVCKVSNKLGAVETRAIVVVEAPDAAEHVTQMPTFVKKLQDVVLKTAGETATFTCQSYANPAAQVVWLHNGKALQQTKSNYKTRLFDDNTATLVIENVTDELCGTYTAVANNQFGDVHTSAQLTISGSEAKKIAASLPYFIIELKPKINVVEGATLSIQADLNGSPIPEVVWLKDNSELVESDRIQMKCDGVNYQLLVRDVGLEDEGTYTITAENEKGKIRQNTEVSVTKSKEVKEKKEKKKVEKKDEGKKKPGRPGLPRPSGASKTEQVTMAFDAPSEGPADSYEVERRCPDQREWVSCGSTKSLELEIKGLTPNTEYIFRVAGKNKQGLGEWSEMTSTLKTASVGQAPQFTISPQSKIIANRDDEFEIAVEFSGTPTPSVKWYKENLQIVPDEKIDVATTSTSSILNLKSQEENGTFNCLIENELGQASASCQVTIFNKPASLQSTPDHSLERNLVPTLQKALNNESAQAGQQIMLTCRISSRSESTVAWFKDDERIESAGRYELSSDKKSNHKLVCHAVQSQDTGKYRCVVTNKYGYAESECNVAVEDVTKFIAPSFSATLSDSTAILGHNITLECKVEGSPAPEVSWTKDGERISTTRRIRQTQDENGNCKLSISKAESDDMGVYVCSATSVAGVDSTSSMVMIAKTTGTDSHLVIAQTADEKHEKPRFTRAPPSLIEVNESGQFTLIAKAVGEPKPTVTWLKDGREILRTNRIYHHFVTGDGESHLIAECVVSKTSGIFSCKAENPNGTVIAETQVIVQRMKPANQLANVAPKFTIPLTDMGIVNGHPTTLSCNVTGSPEPTLEWIYIDDSGHKINLTSSTTDWTECRFGKVAELKSERVLREQRGTYQCIATNSSGQATTQCYLLVGELSDEPAGPPRFVKCLQDTWTPLKESIEFSVELAGFPTPDLTWYHNEKKINEGKDVKITFPSDTTSVLSIKNVSLASLGMYFVEASNIHGVLRTAGRLNVSDERRKAEPPQFKHVLEPVLAVQPKVAFSEEHPRASSSAATARVKKGAAPMFLQGLEDMDLKAGASAAVAGKLGRKLRPHRSTTNDADKLAKALAQSLRLDEPRASIDSRPESAANAALDEVRAAINSRNKRVCRPKFMVKPKPRKVLEEYKSLRLKTAISGNPMPQVHWDKEGIILETGNKYSIYNDGDFYYLEVHHVSTFDKGFYNCTAANNEGIITCTSEIDVLPNKEDSAAQVAKRKSRKEAKAPNFIEVLPGRSQANLNESLCVECSVSAYPCASIIWTRNSVRLLPQADRYTMSYDGECASLKFISVTPGDEGTYACEAVNELGSAVTNMNLQVSGVDPNAAEGIPPLFRFEKIKSVRKVVDGSRVELAAELVQASEPLQIRWLRNKVTIVDSPSFSYSRSENMVFLTIADVFPEDGGEYTVEAKNQSGIARCTMQLDVRNNERSVADEAPRVFDFEPTTRSDPGVSVELRAKVIGHPDPVISWTKAGQKLNNEEKYMMRNEGDKFILRIANVTRADAGKYELTAINPSGQANAELELTVVQSTKTVGAKPKFNESPISVQTCEKNRAELRASFSGTPAPACRWFYNGNELIDGLDGYTITSSDTNSSLLINSVDKKHFGEYLCTIRNQNGEELANAMILSEVLSMFYSSLFLVVFVDIVAQCHVARLLHFLNEERFVGRNIFA.

The region spanning 90–176 is the Ig-like 1 domain; it reads PKFIQVIKAY…GVSTSYGYIT (87 aa). Positions 384-404 are disordered; sequence RFHPQPPKPPRAGTSRRFLPE. 4 Ig-like domains span residues 406–493, 821–913, 943–1038, and 1135–1225; these read PKFV…TQVT, PKIV…AFIN, PKFI…LTIS, and PRFE…LTVD. An intrachain disulfide couples cysteine 842 to cysteine 897. The segment at 1336 to 1360 is disordered; sequence LPPVQKSMSVQEEKASSQRTPSPMN. One can recognise an Ig-like 6 domain in the interval 1679–1762; it reads PKFLRKLVNC…ASNVAGTTFS (84 aa). The cysteines at positions 1700 and 1751 are disulfide-linked. Coiled-coil stretches lie at residues 1766–1786, 2011–2038, and 2065–2085; these read LKLS…SEIK, QSLD…ERTS, and ISDQ…ALQE. Residues 2155–2177 form a disordered region; it reads RKGSDKDKRKATRIKRVPSAHSA. Residues 2163–2172 show a composition bias toward basic residues; sequence RKATRIKRVP. Residues 2205–2231 adopt a coiled-coil conformation; it reads LKQNEEAKEIQELFVKIEKEINTIAEL. Disordered stretches follow at residues 2298 to 2459 and 2614 to 2637; these read IIGI…TADA and KSSL…EVTA. Over residues 2309 to 2323 the composition is skewed to low complexity; it reads RRPSSTPRGSTRSSN. The span at 2324–2341 shows a compositional bias: polar residues; sequence LTTSQDSQATTKMTVSSE. The stretch at 2606 to 2630 forms a coiled coil; sequence LMQTLASEKSSLKAAEEDEKEGEEE. Acidic residues predominate over residues 2621–2636; that stretch reads EEDEKEGEEEGEEEVT. Ig-like domains are found at residues 3095 to 3177 and 3179 to 3264; these read KEVM…SGLY and TERS…SFVS. The segment at 3362 to 3692 is disordered; that stretch reads EVPKVAEPSE…NAEAQKVVDS (331 aa). The segment covering 3655-3665 has biased composition (acidic residues); sequence SEEETPLEETN. 3 Ig-like domains span residues 3789–3878, 3897–3985, and 4038–4125; these read PVFT…CEIV, PHFV…CTID, and PPYF…CVLT. 2 disulfide bridges follow: cysteine 3919/cysteine 3969 and cysteine 4059/cysteine 4109. 14 disordered regions span residues 4553 to 4599, 4634 to 4699, 4750 to 4814, 4826 to 4855, 4912 to 4931, 4950 to 4969, 4989 to 5216, 5267 to 5294, 5306 to 5325, 5345 to 5372, 5428 to 6101, 6127 to 6157, 6214 to 6900, and 6930 to 8453; these read QSRE…SAPT, TVEP…EIVE, GSTA…TSEV, PVPE…EVQP, STAA…VESK, PETS…PVES, PETS…EILE, GSTA…EVEP, PETS…SVES, PETS…EVEP, GSTA…VEPT, VQVP…EVQP, STAA…ETSE, and APVE…DDKL. Basic and acidic residues predominate over residues 4555–4577; the sequence is RELDNTERNFTVNKEKDESKKPS. 56 PVET repeats span residues 4599-4626, 4627-4665, 4666-4704, 4755-4787, 4788-4826, 4827-4865, 4917-4948, 4949-4987, 4988-5026, 5027-5065, 5066-5104, 5105-5143, 5144-5182, 5183-5221, 5273-5304, 5305-5343, 5344-5382, 5434-5465, 5466-5504, 5505-5543, 5544-5582, 5583-5621, 5622-5660, 5661-5699, 5700-5738, 5739-5777, 5778-5816, 5817-5855, 5856-5894, 5895-5933, 5934-5972, 5973-6011, 6012-6050, 6051-6089, 6090-6128, 6129-6167, 6219-6250, 6251-6289, 6290-6328, 6329-6367, 6368-6406, 6407-6445, 6446-6484, 6485-6523, 6524-6562, 6563-6601, 6602-6640, 6641-6679, 6680-6718, 6719-6757, 6758-6796, 6797-6835, 6836-6874, 6875-6913, 6914-6952, and 6953-6991; these read TVEK…KDVP, VPET…KDVP, VPET…KDVT, PAQE…KDVP, AQEP…KDVP, VPET…KVVP, VPET…KDVS, VPET…KDVQ, AHEP…KDVP, VPET…KDLP, VPET…KDVA, VPEA…KDVP, and VPEA…KLKK. Composition is skewed to basic and acidic residues over residues 4638–4651 and 4677–4691; these read TVEK…KETS and TVEK…EKSE. The segment covering 4960–4969 has biased composition (basic and acidic residues); the sequence is TVEKLKPVES. The segment covering 5038–5051 has biased composition (basic and acidic residues); sequence TVEKLKPVESKETS. 2 stretches are compositionally biased toward basic and acidic residues: residues 5116-5129 and 5155-5168; these read TVEK…KETS. Positions 5212–5235 form a coiled coil; that stretch reads AEILEQKDVTCEEEIKELLTEVEV. Residues 5316-5325 show a composition bias toward basic and acidic residues; that stretch reads TVEKLKSVES. Composition is skewed to basic and acidic residues over residues 5477 to 5490 and 5516 to 5529; these read TVEK…KETS. Basic and acidic residues-rich tracts occupy residues 6690 to 6704, 6729 to 6743, 6768 to 6782, 6807 to 6821, 6846 to 6860, and 6885 to 6899; these read PTKE…KETS. 4 stretches are compositionally biased toward basic and acidic residues: residues 6972 to 7606, 7613 to 7630, 7637 to 8062, and 8069 to 8453; these read ESKE…DNFK, LQKE…DNFK, and LQKE…DDKL. Residues 6984 to 7812 are a coiled coil; the sequence is QADAKLKKEK…DKLKQETDAK (829 aa). BLUE repeat units lie at residues 6992 to 6996, 6997 to 7012, 7013 to 7028, 7029 to 7044, 7045 to 7060, 7061 to 7076, 7077 to 7092, 7093 to 7108, 7109 to 7124, 7125 to 7140, 7141 to 7156, 7157 to 7172, 7173 to 7188, 7189 to 7204, 7205 to 7220, 7221 to 7236, 7237 to 7252, 7253 to 7268, 7269 to 7284, 7285 to 7300, 7301 to 7316, 7317 to 7332, 7333 to 7348, 7349 to 7364, 7365 to 7380, 7381 to 7396, 7397 to 7412, 7413 to 7428, 7429 to 7444, 7445 to 7460, 7461 to 7476, 7477 to 7492, 7493 to 7508, 7509 to 7524, 7525 to 7540, 7541 to 7556, 7557 to 7572, 7573 to 7588, 7589 to 7604, 7605 to 7620, 7621 to 7628, 7629 to 7644, 7645 to 7652, 7653 to 7668, 7669 to 7684, 7685 to 7700, 7701 to 7716, 7717 to 7732, 7733 to 7748, 7749 to 7764, 7765 to 7772, 7773 to 7788, 7789 to 7804, 7805 to 7820, 7821 to 7836, 7837 to 7852, 7853 to 7868, 7869 to 7884, 7885 to 7900, 7901 to 7916, 7917 to 7932, 7933 to 7948, 7949 to 7964, 7965 to 7980, 7981 to 7996, 7997 to 8012, 8013 to 8028, 8029 to 8044, 8045 to 8060, 8061 to 8076, 8077 to 8084, 8085 to 8100, 8101 to 8116, 8117 to 8132, 8133 to 8148, 8149 to 8164, 8165 to 8180, 8181 to 8196, 8197 to 8212, 8213 to 8228, 8229 to 8244, 8245 to 8260, 8261 to 8276, 8277 to 8292, 8293 to 8308, 8309 to 8324, 8325 to 8340, 8341 to 8356, 8357 to 8371, 8373 to 8388, 8389 to 8404, 8405 to 8420, 8421 to 8436, 8437 to 8452, 8453 to 8468, and 8469 to 8484; these read EKDDK, HKQE…NDDK, LKQE…NDDK, LKQE…KHDK, LKQE…KDDK, LKQD…KDDK, LKHE…KDDK, LKQE…KDDR, LKKD…KDDK, LKHE…KDDN, FKQE…KDDK, LKQEKDDN, LKQEKDDK, LKQEKNDK, LKQE…KDNK, LKQE…KDDN, LKQE…EKDD, and LKQE…KGDK. Residues 7876 to 8273 adopt a coiled-coil conformation; sequence KLKKEKDNKL…EADAKLKKDK (398 aa). The stretch at 8316–8490 forms a coiled coil; that stretch reads KLKKEKDNKL…KGDKLKLEDQ (175 aa). Positions 8599-8611 are enriched in basic residues; it reads KHLKKKKKHHKKE. Residues 8599–8626 form a disordered region; the sequence is KHLKKKKKHHKKEKIAVKETEQDEKTVS. Over residues 8612–8626 the composition is skewed to basic and acidic residues; it reads KIAVKETEQDEKTVS. The 92-residue stretch at 8950–9041 folds into the Fibronectin type-III 1 domain; that stretch reads KPRKAQLVAL…EIIEVNTLDY (92 aa). Disordered regions lie at residues 9079-9104, 9147-9436, 9481-9609, 9702-10224, 10239-10274, 10539-11018, 11030-11111, 11123-11213, 11225-11387, 11420-11592, 11624-11825, 11872-11955, 11996-12054, 12397-12418, 12537-12974, 13026-13045, 13065-13261, 13283-13514, 13553-13574, and 13594-13874; these read IEEH…LDSE, VQKI…AAAE, EEQS…ETES, ADAV…ESRI, ESDD…EDSP, QSAP…DSFT, EDAV…QKDQ, KKLA…QDKT, AKTT…SLTS, KGLN…NPEL, LTKK…SDNL, LSAH…TSLS, TNLI…LQKN, GRRV…RKKR, EESR…PAES, EAAK…TEVV, AAEA…LNDK, QAQA…EQLK, EEKQ…KLKL, and EKLA…RRTG. Basic residues predominate over residues 9084–9093; that stretch reads KLKKKSKKSK. Basic and acidic residues-rich tracts occupy residues 9172-9184 and 9191-9202; these read VKKD…KKSL and TKKEIQGKPEKK. Over residues 9213-9231 the composition is skewed to polar residues; it reads SSISETSETLTKDLTQTKQ. A compositionally biased stretch (basic and acidic residues) spans 9232–9267; the sequence is SEPEPAKRTTETSVQDEVKRKTETTSKSKQTTEEHP. Positions 9273–9283 are enriched in low complexity; sequence SDSSISSTSDA. Residues 9295 to 9332 are compositionally biased toward basic and acidic residues; sequence EAQKVTEKPETAKLESKSKMTEDTTKESDNKETVDEKP. Residues 9346–9359 show a composition bias toward low complexity; that stretch reads STISETSETSAVES. The stretch at 9371–9510 forms a coiled coil; it reads AAVDKEKKQK…QTKAKAAEKQ (140 aa). Basic and acidic residues-rich tracts occupy residues 9373–9436 and 9481–9521; these read VDKE…AAAE and EEQS…KSNK. Over residues 9547-9558 the composition is skewed to low complexity; the sequence is SSISQKSDTSKT. A coiled-coil region spans residues 9577–9749; that stretch reads TSKQKETDKK…QTVEEQAKLD (173 aa). Basic and acidic residues-rich tracts occupy residues 9578-9609 and 9702-9783; these read SKQK…ETES and ADAV…DEKP. Positions 9798 to 9809 are enriched in polar residues; that stretch reads SISQKSVTSKTV. 3 stretches are compositionally biased toward basic and acidic residues: residues 9819–10004, 10040–10149, and 10162–10196; these read ETQK…DEKP, ETQK…KSEN, and VKSE…EPKE. 2 coiled-coil regions span residues 9822–9995 and 10046–10129; these read KVAD…TEEA and EADK…TSKK. Residues 10197–10206 are compositionally biased toward basic residues; it reads KKKIIKKKKD. A compositionally biased stretch (basic and acidic residues) spans 10207-10224; the sequence is TTKPQEASKELSSDESRI. Polar residues predominate over residues 10239-10250; sequence ESDDLSTASTIK. In terms of domain architecture, Fibronectin type-III 2 spans 10461-10553; sequence KPTSLQVTST…DTIEATTQAE (93 aa). Positions 10566–10609 are enriched in basic and acidic residues; it reads EKVKEPVSKKPENTKESEGHKKRDRKESEDHDENNLGKSGKDEF. The span at 10612–10637 shows a compositional bias: polar residues; sequence SGESGTSNQNEESAQLNTSFTSTEQH. The segment covering 10663 to 10680 has biased composition (acidic residues); that stretch reads IDADVVEVEYDEQGDDIP. The span at 10707–10716 shows a compositional bias: basic and acidic residues; that stretch reads MAEKDSDAME. Polar residues predominate over residues 10779–10790; sequence ADQTGMSIQDLN. Basic and acidic residues-rich tracts occupy residues 10840 to 10852 and 10863 to 10884; these read QLDK…DDKM and KKPE…KESD. Polar residues predominate over residues 10961–10975; the sequence is LSTSEQVENASQNLG. Composition is skewed to basic and acidic residues over residues 10999–11009, 11045–11055, and 11076–11089; these read IHGEAESKLGE, SAEKTSLEVRD, and SNRD…RDLN. A coiled-coil region spans residues 11018-11064; it reads TLQDLYEELKAKEDAVEAGAETSNADQSAEKTSLEVRDMKKKMKKKQ. Polar residues predominate over residues 11090–11108; that stretch reads TQHSNQTGEDESSTFNFGQ. Residues 11159 to 11173 are compositionally biased toward basic and acidic residues; sequence KKGEENEKTKFEAKH. Residues 11174-11187 show a composition bias toward low complexity; it reads LGSSSASDSLAEST. 3 stretches are compositionally biased toward basic and acidic residues: residues 11195–11211, 11271–11280, and 11295–11318; these read KGEV…KNQD, IPDKNRDSDK, and ESAE…EKTL. A compositionally biased stretch (polar residues) spans 11374–11387; that stretch reads SKVTTSFADESLTS. Composition is skewed to basic and acidic residues over residues 11440–11464 and 11472–11485; these read KVKD…KDQK and GSKD…EEKT. Residues 11503 to 11515 are compositionally biased toward polar residues; it reads MTDQKNVQESQYA. Composition is skewed to basic and acidic residues over residues 11624 to 11635, 11645 to 11669, and 11722 to 11735; these read LTKKQDENDAKK, AKKD…DSRE, and VSEK…EKTV. The segment covering 11754 to 11767 has biased composition (polar residues); that stretch reads ESLNASSALSTTDV. The span at 11916–11937 shows a compositional bias: basic and acidic residues; sequence AEDKYVESRKKTTLKKKPEQKQ. A coiled-coil region spans residues 12408-12428; sequence ELDDAKKRKKRRIKRVVERRN. The Ig-like 12 domain maps to 12432–12547; it reads PRLTQLIPPR…ESRDDDKSVD (116 aa). Composition is skewed to basic and acidic residues over residues 12537–12547, 12555–12567, and 12609–12689; these read EESRDDDKSVD, LEEK…DKSK, and VGAK…KKDA. The span at 12690 to 12701 shows a compositional bias: low complexity; the sequence is SQPSSSKESSPP. Polar residues predominate over residues 12729 to 12740; that stretch reads TMHSETNITTTI. Basic and acidic residues-rich tracts occupy residues 12766-12839, 12852-12865, and 12889-12940; these read ESAK…KNKS, ETKK…EVPK, and PADD…DDKS. Positions 12797–12828 form a coiled coil; the sequence is KKSEKKDEVTAEKQSTEALIESKKKEVDESKI. The stretch at 12980–13103 forms a coiled coil; the sequence is AEVNKAKKQK…LKLEEESAAK (124 aa). Composition is skewed to basic and acidic residues over residues 13065–13124, 13133–13145, 13176–13191, 13203–13261, 13283–13327, 13337–13354, and 13361–13416; these read AAEA…KAGE, PTSK…KDVG, TDSE…DEPT, EADK…LNDK, QAQA…EKQA, AVKK…EANK, and LKIE…DEKP. Positions 13237-13380 form a coiled coil; sequence LDAQEKIKKV…SKQTVEEQAK (144 aa). Residues 13431–13442 show a composition bias toward polar residues; sequence SISQKSETSKTV. Basic and acidic residues predominate over residues 13452–13514; it reads ETQKVADAAR…KQKEKDEQLK (63 aa). Residues 13455–13628 adopt a coiled-coil conformation; sequence KVADAARKQK…ETKSKQTEEA (174 aa). Over residues 13594-13637 the composition is skewed to basic and acidic residues; the sequence is EKLAQEQSRLEDEAKKSAEKQKLESETKSKQTEEAPKESVDEKP. The span at 13651-13662 shows a compositional bias: low complexity; it reads SSISQKSKSAKS. Residues 13684 to 13696 are compositionally biased toward polar residues; it reads KVEQSPDESTSAT. Residues 13697 to 13735 are compositionally biased toward basic and acidic residues; the sequence is IKRDPAQKTEEISKQDDGDEKKTTTDGKPPKPEDSEATP. Over residues 13747-13760 the composition is skewed to low complexity; sequence SDSVASDASLADVS. Positions 13761–13770 are enriched in basic and acidic residues; that stretch reads KLSDDVEEKP. Residues 13784–13793 are compositionally biased toward polar residues; sequence SVISETSSVD. Composition is skewed to basic and acidic residues over residues 13795–13808 and 13824–13843; these read IKPE…EKAE and SEPK…DMMT. The Ig-like 13 domain maps to 13963–14036; it reads PVDFVKYLPR…RAKYEDSGKY (74 aa). 3 consecutive Fibronectin type-III domains span residues 14153–14247, 14253–14348, and 14350–14448; these read APGD…TGSP, VEFP…TVEG, and VPEI…VLAD. 3 Ig-like domains span residues 14451–14542, 14550–14634, and 14638–14727; these read PRVL…VGIS, SSFS…VIVN, and PHIL…LVFE. Cysteines 14568 and 14618 form a disulfide. Fibronectin type-III domains follow at residues 14826-14920 and 14937-15027; these read APCD…TLES and ILRT…LVPG. The segment at 15011–15180 is disordered; the sequence is VSSPSEETNP…TGKETTEKKK (170 aa). 2 stretches are compositionally biased toward basic and acidic residues: residues 15034–15060 and 15085–15117; these read KTEK…EKQV and KVAE…ESRR. Over residues 15118–15132 the composition is skewed to polar residues; that stretch reads GSLQASSDNESVTTT. The segment covering 15133–15177 has biased composition (basic and acidic residues); that stretch reads SEKRSEAELEKNSEKSAEKKSTSADLEAADKAETEKSETGKETTE. 2 Ig-like domains span residues 15180-15274 and 15283-15371; these read KKVV…VSIA and PKVE…IALR. 2 consecutive Fibronectin type-III domains span residues 15383–15475 and 15503–15596; these read PTGP…LKKK and QIGK…TTES. Residues 15470–15503 are disordered; the sequence is TTLKKKEETGKQKSEKSESDEKKSESDKVSELKQ. Basic and acidic residues predominate over residues 15473 to 15503; the sequence is KKKEETGKQKSEKSESDEKKSESDKVSELKQ. Ig-like domains lie at 15599–15687 and 15692–15786; these read PAFT…CKLT and PEIN…IQVT. The 93-residue stretch at 15791–15883 folds into the Fibronectin type-III 10 domain; the sequence is APGKPAVEDQ…DESELVVVKN (93 aa). One can recognise a Protein kinase domain in the interval 15934-16189; that stretch reads YIIHEELGKG…VQDALRHPWI (256 aa). ATP-binding positions include 15940–15948 and lysine 15963; that span reads LGKGAYGTV. The Proton acceptor role is filled by aspartate 16055. Residues 16206–16264 form an autoinhibitory domain region; that stretch reads KMQPKLDKSGVPARQKRNFLSLKRWSDDLLPIGRLAKRGAIFRRLTMDGVFERNIAFDT. 4 Ig-like domains span residues 16268-16358, 16500-16575, 16605-16692, and 16705-16789; these read PSVK…AKLS, GKQL…VAKN, PRFR…FSVV, and PKFL…KDFT. Intrachain disulfides connect cysteine 16290-cysteine 16342, cysteine 16508-cysteine 16571, cysteine 16627-cysteine 16677, and cysteine 16726-cysteine 16778. Residues 16805–16827 form a disordered region; the sequence is LTPVRSRSRSRSRSPSVVGGEIQ. Ig-like domains follow at residues 16829–16918, 16932–17025, and 17037–17126; these read PPVV…AIVV, PTFV…LTIS, and PYFI…TEVS. Residues 17121–17169 form a disordered region; sequence QNTEVSVTKSKEVKEKKEKKKVEKKDEGKKKPGRPGLPRPSGASKTEQV. Over residues 17129 to 17150 the composition is skewed to basic and acidic residues; the sequence is KSKEVKEKKEKKKVEKKDEGKK. The Fibronectin type-III 11 domain maps to 17154 to 17245; it reads RPGLPRPSGA…MTSTLKTASV (92 aa). Ig-like domains lie at 17249–17336, 17358–17447, 17457–17548, 17570–17661, 17676–17765, 17782–17873, 18008–18097, 18121–18213, 18224–18316, 18329–18417, and 18429–18519; these read PQFT…CQVT, PTLQ…CNVA, PSFS…VMIA, PRFT…TQVI, PKFT…QATT, PRFV…LNVS, PKFM…SEID, PNFI…LQVS, PPLF…MQLD, PRVF…LELT, and PKFN…MILS. Intrachain disulfides connect cysteine 17379-cysteine 17431 and cysteine 17478-cysteine 17530. A disulfide bridge links cysteine 17697 with cysteine 17754. An intrachain disulfide couples cysteine 18143 to cysteine 18195.

It belongs to the protein kinase superfamily. CAMK Ser/Thr protein kinase family. In terms of assembly, interacts (via C-terminus) with myosin. Interacts with actin. Requires Mg(2+) as cofactor. Expression is restricted to body wall, enteric and vulval muscles.

The protein localises to the cytoplasm. It localises to the myofibril. It is found in the sarcomere. Its subcellular location is the a band. The protein resides in the i band. The protein localises to the nucleus membrane. It carries out the reaction L-seryl-[protein] + ATP = O-phospho-L-seryl-[protein] + ADP + H(+). The enzyme catalyses L-threonyl-[protein] + ATP = O-phospho-L-threonyl-[protein] + ADP + H(+). Its function is as follows. Serine/threonine-protein kinase. Key component in the assembly and functioning of muscles. By providing connections at the level of individual microfilaments, it contributes to the fine balance of forces between the two halves of the sarcomere. The size and extensibility of the cross-links are the main determinants of sarcomere extensibility properties of muscle. In non-muscle cells, seems to play a role in chromosome condensation and chromosome segregation during mitosis. Might link the lamina network to chromatin or nuclear actin, or both during interphase. In Caenorhabditis elegans, this protein is Titin homolog.